We begin with the raw amino-acid sequence, 1293 residues long: MNFNNELSDLKNRFLFRTLRAQKCSDVARDRIDFFIWELKFLNCFLHLQSFAFASECGMLDISQKMIEICKRFNTPPPHNSFAYWKEVICKRLCAISIQPDASSDDGFACWKKVIWKTKQEFRAKYSFPKTLLADNKVYDDDDTNPKFVMEFIDAVVGNLNVLVKINDPSSLLFVPGPKEQIEQVLKELKLLRFFVCFVSNKCIEPQYQHTTFYTHALIEASHIAMVVWLNLPIYGNRNQDLASSEVSCLLSDFMEMKIKSIQPDISRNNIYIDVLRALKSTIPQAQDKHAAESGIVETPTHNLMVGLSDQMANLQEMLCLLRDNLIHLPILDLEFHLQDMDSVIVDAGLLIYSLYDIKGQKEDTTLEDINQALGFDLPRNIEPIKAMINLVMQKAFQCNLPRIHGLGYVDFLLKNLKDFQGRYSDSLDFLKNQLQVIQTEFESLQPFLKVVVEEPHNKLKTLNEDCATQIIRKAYEVEYVVDACINKEVPQWCIERWLLDIIEEITCIKAKIQEKNTVEDTMKTVIARTSSKLARTPRMNEEIVGFEDVIENLRKKLLNGTKGQDVISIHGMPGLGKTTLANSLYSDRSVFSQFDICAQCCVSQVYSYKDLILALLRDAIGEGSVRRELHANELADMLRKTLLPRRYLILVDDVWENSVWDDLRGCFPDVNNRSRIILTTRHHEVAKYASVHSDPLHLRMFDEVESWKLLEKKVFGEESCSPLLKNVGLRIAKMCGQLPLSIVLVAGILSEMEKEVECWEQVANNLGSYIHNDSRAIVDKSYHVLPCHLKSCFLYFGAFLEDRVIDISRLIRLWISEAFIKSSEGRRLEDIAEGYLENLIGRNLVMVTQRSISDGKAKECRLHDVLLDFCKERAAEENFLLWINRDQITKPSSCVYSHKQHAHLAFTEMHNLVEWSASCSFVGSVVLSNKYDSYFSTRDISSLHDFSISRILPNFKFLKVLDLEHRVFIDFIPTELVYLKYFSAHIEQNSIPSSISNLWNLETLILKSPIYALRCTLLLPSTVWDMVKLRHLYIPDFSTRIEAALLENSAKLYNLETLSTLYFSRVEDAELMLRKTPNLRKLICEVECLEYPPQYHVLNFPIRLEILKLYRSKFKTIPFCISAPNLKYLKLCGFSLDSQYLSETADHLKHLEVLILYKVEFGDHREWKVSNGKFPQLKILKLEYLSLVKWIVADDAFPNLEQLVLRGCQDLMEIPSCFMDILSLKYIGVEYCNESVVKSALNIQETQVEDYQNTNFKLVLIEFSLQKKAWKLNLTDAEDMHNAVKNILAEIR.

Coiled-coil stretches lie at residues 423 to 446 (RYSD…ESLQ) and 538 to 560 (PRMN…KLLN). The NB-ARC domain maps to 539–826 (RMNEEIVGFE…SEAFIKSSEG (288 aa)). 572-579 (GMPGLGKT) lines the ATP pocket. LRR repeat units follow at residues 876-899 (AEEN…VYSH), 956-981 (FKFL…VYLK), 1027-1049 (MVKL…LLEN), 1056-1079 (LETL…KTPN), 1102-1125 (PIRL…ISAP), 1149-1172 (LKHL…KVSN), 1175-1197 (FPQL…ADDA), 1198-1222 (FPNL…FMDI), and 1235-1259 (ESVV…NFKL).

The protein belongs to the disease resistance NB-LRR family.

It localises to the cytoplasm. The protein localises to the membrane. In terms of biological role, confers resistance to late blight (Phytophthora infestans) races carrying the avirulence gene Avr1. Resistance proteins guard the plant against pathogens that contain an appropriate avirulence protein via an indirect interaction with this avirulence protein. That triggers a defense system including the hypersensitive response, which restricts the pathogen growth. The polypeptide is Late blight resistance protein R1-A (R1A) (Solanum demissum (Wild potato)).